Here is a 301-residue protein sequence, read N- to C-terminus: 2-aminobenzoylacetyl-CoA thioesterase (301 aa).

The Fe cation site is built by H69, H71, D73, H74, H159, D178, and H221.

Belongs to the metallo-beta-lactamase superfamily.

It catalyses the reaction (2-aminobenzoyl)acetyl-CoA + H2O = (2-aminobenzoyl)acetate + CoA + H(+). With respect to regulation, thioesterase activity, but not pyocyanine production, is inhibited by 2-(pyridin-3-yl)benzoic acid, 2-(1H-pyrrol-1-yl)benzoic acid and 3-methylthiophene-2-carboxylic acid. Compounds bind to the active center. Its function is as follows. Required for the biosynthesis of the quorum-sensing signaling molecules 2-heptyl-4(1H)-quinolone (HHQ) and 2-heptyl-3-hydroxy-4(1H)-quinolone (Pseudomonas quinolone signal or PQS), which are important for biofilm formation and virulence. Catalyzes the hydrolysis of the intermediate 2-aminobenzoylacetyl-CoA (2-ABA-CoA) to form 2-aminobenzoylacetate (2-ABA), the precursor of HHQ. In vitro, can also hydrolyze other substrates such as S-ethyl-acetothioacetate and acetoacetyl-CoA, but is inactive against anthraniloyl-CoA, malonyl-CoA and octanoyl-CoA. Beyond its thioesterase function, is involved in the regulation of diverse genes coding for key virulence determinants and biofilm development. This is 2-aminobenzoylacetyl-CoA thioesterase from Pseudomonas aeruginosa (strain ATCC 15692 / DSM 22644 / CIP 104116 / JCM 14847 / LMG 12228 / 1C / PRS 101 / PAO1).